The following is a 225-amino-acid chain: PKHD-type hydroxylase YbiX (225 aa).

The Fe2OG dioxygenase domain maps to Thr-78–Ser-177. Positions 96, 98, and 158 each coordinate Fe cation. Arg-168 serves as a coordination point for 2-oxoglutarate.

Fe(2+) is required as a cofactor. Requires L-ascorbate as cofactor.

The chain is PKHD-type hydroxylase YbiX from Escherichia coli O45:K1 (strain S88 / ExPEC).